Here is a 75-residue protein sequence, read N- to C-terminus: Beta-defensin 42 (75 aa).

Residues 1 to 21 (MNLRLSCLLFILVTSLPAGRC) form the signal peptide. 3 disulfide bridges follow: cysteine 33/cysteine 60, cysteine 40/cysteine 54, and cysteine 44/cysteine 61.

This sequence belongs to the beta-defensin family. Epididymis-specific, with highest levels in the initial segment and distal caput.

Its subcellular location is the secreted. In terms of biological role, has bactericidal activity. May play a role in the antimicrobial protection of sperm and urogenital tract epithelia. In Mus musculus (Mouse), this protein is Beta-defensin 42.